A 306-amino-acid chain; its full sequence is Porphobilinogen deaminase (306 aa).

Cysteine 240 carries the S-(dipyrrolylmethanemethyl)cysteine modification.

This sequence belongs to the HMBS family. Monomer. Requires dipyrromethane as cofactor.

The enzyme catalyses 4 porphobilinogen + H2O = hydroxymethylbilane + 4 NH4(+). Its pathway is porphyrin-containing compound metabolism; protoporphyrin-IX biosynthesis; coproporphyrinogen-III from 5-aminolevulinate: step 2/4. Tetrapolymerization of the monopyrrole PBG into the hydroxymethylbilane pre-uroporphyrinogen in several discrete steps. This is Porphobilinogen deaminase from Thiobacillus denitrificans (strain ATCC 25259 / T1).